The chain runs to 350 residues: Biotin synthase (350 aa).

Residues 41–268 (NEVQISRLLS…LSRVRLSAGR (228 aa)) form the Radical SAM core domain. [4Fe-4S] cluster contacts are provided by C56, C60, and C63. Positions 100, 131, 191, and 263 each coordinate [2Fe-2S] cluster.

This sequence belongs to the radical SAM superfamily. Biotin synthase family. In terms of assembly, homodimer. The cofactor is [4Fe-4S] cluster. [2Fe-2S] cluster is required as a cofactor.

It carries out the reaction (4R,5S)-dethiobiotin + (sulfur carrier)-SH + 2 reduced [2Fe-2S]-[ferredoxin] + 2 S-adenosyl-L-methionine = (sulfur carrier)-H + biotin + 2 5'-deoxyadenosine + 2 L-methionine + 2 oxidized [2Fe-2S]-[ferredoxin]. Its pathway is cofactor biosynthesis; biotin biosynthesis; biotin from 7,8-diaminononanoate: step 2/2. Its function is as follows. Catalyzes the conversion of dethiobiotin (DTB) to biotin by the insertion of a sulfur atom into dethiobiotin via a radical-based mechanism. This is Biotin synthase from Shewanella putrefaciens (strain CN-32 / ATCC BAA-453).